Reading from the N-terminus, the 448-residue chain is Trigger factor (448 aa).

In terms of domain architecture, PPIase FKBP-type spans 167 to 253 (GSIVRVDFVE…IKDIKKRDIP (87 aa)).

It belongs to the FKBP-type PPIase family. Tig subfamily.

It is found in the cytoplasm. The catalysed reaction is [protein]-peptidylproline (omega=180) = [protein]-peptidylproline (omega=0). Involved in protein export. Acts as a chaperone by maintaining the newly synthesized protein in an open conformation. Functions as a peptidyl-prolyl cis-trans isomerase. The polypeptide is Trigger factor (Borrelia hermsii (strain HS1 / DAH)).